The primary structure comprises 261 residues: Putative [LysW]-aminoadipate/[LysW]-glutamate kinase (261 aa).

Substrate-binding positions include 35-36 (GG), R62, and N162.

The protein belongs to the acetylglutamate kinase family. LysZ subfamily.

Its subcellular location is the cytoplasm. It carries out the reaction [amino-group carrier protein]-C-terminal-N-(1,4-dicarboxybutan-1-yl)-L-glutamine + ATP = [amino-group carrier protein]-C-terminal-N-(1-carboxy-5-phosphooxy-5-oxopentan-1-yl)-L-glutamine + ADP. The catalysed reaction is [amino-group carrier protein]-C-terminal-gamma-(L-glutamyl)-L-glutamate + ATP = [amino-group carrier protein]-C-terminal-gamma-(5-phospho-L-glutamyl)-L-glutamate + ADP. The protein operates within amino-acid biosynthesis; L-lysine biosynthesis via AAA pathway; L-lysine from L-alpha-aminoadipate (Thermus route): step 2/5. Its pathway is amino-acid biosynthesis; L-arginine biosynthesis. Functionally, involved in both the arginine and lysine biosynthetic pathways. Phosphorylates the LysW-bound precursors glutamate (for arginine biosynthesis), respectively alpha-aminoadipate (for lysine biosynthesis). The protein is Putative [LysW]-aminoadipate/[LysW]-glutamate kinase of Pyrobaculum islandicum (strain DSM 4184 / JCM 9189 / GEO3).